The chain runs to 449 residues: Exodeoxyribonuclease 7 large subunit (449 aa).

It belongs to the XseA family. As to quaternary structure, heterooligomer composed of large and small subunits.

The protein localises to the cytoplasm. It carries out the reaction Exonucleolytic cleavage in either 5'- to 3'- or 3'- to 5'-direction to yield nucleoside 5'-phosphates.. Bidirectionally degrades single-stranded DNA into large acid-insoluble oligonucleotides, which are then degraded further into small acid-soluble oligonucleotides. The chain is Exodeoxyribonuclease 7 large subunit from Lacticaseibacillus casei (strain BL23) (Lactobacillus casei).